We begin with the raw amino-acid sequence, 93 residues long: MFKVNEYFDGTVKSIAFTQADGEATIGVMAAGEYEFGTAQREIMHVISGELSVKLPDSTDWETFATGNQFNVPANSKFQIKVKVDTAYLCEYR.

This sequence belongs to the nucleoside phosphorylase PpnP family.

It catalyses the reaction a purine D-ribonucleoside + phosphate = a purine nucleobase + alpha-D-ribose 1-phosphate. The catalysed reaction is adenosine + phosphate = alpha-D-ribose 1-phosphate + adenine. It carries out the reaction cytidine + phosphate = cytosine + alpha-D-ribose 1-phosphate. The enzyme catalyses guanosine + phosphate = alpha-D-ribose 1-phosphate + guanine. It catalyses the reaction inosine + phosphate = alpha-D-ribose 1-phosphate + hypoxanthine. The catalysed reaction is thymidine + phosphate = 2-deoxy-alpha-D-ribose 1-phosphate + thymine. It carries out the reaction uridine + phosphate = alpha-D-ribose 1-phosphate + uracil. The enzyme catalyses xanthosine + phosphate = alpha-D-ribose 1-phosphate + xanthine. Its function is as follows. Catalyzes the phosphorolysis of diverse nucleosides, yielding D-ribose 1-phosphate and the respective free bases. Can use uridine, adenosine, guanosine, cytidine, thymidine, inosine and xanthosine as substrates. Also catalyzes the reverse reactions. The chain is Pyrimidine/purine nucleoside phosphorylase from Pseudomonas syringae pv. syringae (strain B728a).